A 161-amino-acid polypeptide reads, in one-letter code: MSVLSPEIKCETSKFTRSSFGSCLIFESSWKKAVLETQKIKKEYTTAFGLEELKECIKMPYLPGLQSCQKSVSSTPLEVPKRLPRADAEVSAVRLKKTKETCSVAPLWEKSKGSGFSDPLTGAPSQYLERLSKIAILEYDTIRQETTTKSKKSKKRDLRDR.

This is an uncharacterized protein from Homo sapiens (Human).